A 540-amino-acid polypeptide reads, in one-letter code: Chaperonin GroEL (540 aa).

Residues 29 to 32 (TLGP), 86 to 90 (DGTTT), G413, and D493 each bind ATP. Positions 520–540 (AEKPEPKPAPGPADPGAGMDF) are disordered.

It belongs to the chaperonin (HSP60) family. As to quaternary structure, forms a cylinder of 14 subunits composed of two heptameric rings stacked back-to-back. Interacts with the co-chaperonin GroES.

It localises to the cytoplasm. It carries out the reaction ATP + H2O + a folded polypeptide = ADP + phosphate + an unfolded polypeptide.. Its function is as follows. Together with its co-chaperonin GroES, plays an essential role in assisting protein folding. The GroEL-GroES system forms a nano-cage that allows encapsulation of the non-native substrate proteins and provides a physical environment optimized to promote and accelerate protein folding. The sequence is that of Chaperonin GroEL from Tropheryma whipplei (Whipple's bacillus).